A 130-amino-acid chain; its full sequence is Small ribosomal subunit protein uS8 (130 aa).

This sequence belongs to the universal ribosomal protein uS8 family. As to quaternary structure, part of the 30S ribosomal subunit.

One of the primary rRNA binding proteins, it binds directly to 16S rRNA central domain where it helps coordinate assembly of the platform of the 30S subunit. The polypeptide is Small ribosomal subunit protein uS8 (Caldivirga maquilingensis (strain ATCC 700844 / DSM 13496 / JCM 10307 / IC-167)).